A 115-amino-acid chain; its full sequence is U3-lycotoxin-Ls1i (115 aa).

The signal sequence occupies residues 1–20 (MKFVLLFGVFLVTLFSYSSA). The propeptide occupies 21-44 (EMLDDFDQADEDELLSLIEKEEAR). 4 disulfides stabilise this stretch: Cys48–Cys63, Cys55–Cys72, Cys62–Cys87, and Cys74–Cys85.

It belongs to the neurotoxin 19 (CSTX) family. 01 subfamily. As to expression, expressed by the venom gland.

Its subcellular location is the secreted. The protein is U3-lycotoxin-Ls1i of Lycosa singoriensis (Wolf spider).